Here is a 417-residue protein sequence, read N- to C-terminus: Acetyltransferase nanB (417 aa).

An N-terminal signal peptide occupies residues 1 to 24 (MRPSTTTLSLLVFLISSILLATTG). 5 helical membrane-spanning segments follow: residues 150 to 170 (LAVS…LKNI), 284 to 304 (YLNN…FNWI), 307 to 327 (VQDG…GYFL), 356 to 376 (VGAL…VYPF), and 389 to 409 (FVDV…AAAL).

This sequence belongs to the wax synthase family.

It localises to the membrane. It participates in secondary metabolite biosynthesis. Its function is as follows. Acetyltransferase; part of the gene cluster that mediates the biosynthesis of the benzazepine alkaloid nanangelenin A which contains an unprecedented 3,4-dihydro-1-benzazepine-2,5-dione-N-prenyl-N-acetoxy-anthranilamide scaffold. The first step of nanangelenin biosynthesis is catalyzed by the indoleamine 2,3-dioxygenase nanC which produces N-formyl-kynurenine through the catabolism of tryptophan. The two-module NRPS nanA then utilizes anthranilate (Ant) and L-kynurenine (L-Kyn) to assemble the dipeptide product nanangelenin B. The first adenylation domain of nanA (A1) loads anthranilate onto the T1 domain, while A2 loads kynurenine, generated through spontaneous nonenzymatic deformylation of the nanC-supplied N-formyl-kynurenine. The peptide bond formation between the tethered amino acids is catalyzed by the first condensation domain (C1) between anthranilate's carbonyl carbon and kynurenine's aliphatic primary amine. The second C domain (C2) catalyzes the final cyclization event between the aromatic amine of kynurenine and the tethered carbonyl carbon, yielding nanangelenin B. The terminal T3 domain enhances the catalytic efficiency of C2, suggesting the T2-tethered Ant-L-Kyn is transferred to T3 prior to cyclization by C2. Once released from nanA, nanangelenin B is then prenylated by the prenyltransferase nanD to form nanangelenin C. Nanangelenin C is then N-hydroxylated by the FAD-dependent monooxygenase nanF and further acetylated by the acetyltransferase nanB to yield nanangelenin F. Finally, the N-methyltransferase nanE methylates the amide nitrogen of 1-benzazepine to convert nanangelenin F into nanangelenin A. NanE is also able to methylate most of the intermediates of the pathway such as nanangelenin B and nanangelenin C to produce nanangelenin D and nanangelenin E, respectively. This is Acetyltransferase nanB from Aspergillus nanangensis.